The sequence spans 614 residues: Syringomycin synthase SyrB1 (614 aa).

The Carrier domain occupies 535-610 (KGLSEQEHFV…VLADHITRSL (76 aa)). S570 carries the O-(pantetheine 4'-phosphoryl)serine modification.

This sequence belongs to the ATP-dependent AMP-binding enzyme family. The cofactor is pantetheine 4'-phosphate.

The catalysed reaction is holo-[peptidyl-carrier protein] + L-threonine + ATP = L-threonyl-[peptidyl-carrier protein] + AMP + diphosphate. Its function is as follows. Involved in the biosynthesis of syringomycin E, a cyclic lipodepsinonapeptide toxin with phytotoxic activity. Specifically adenylates L-threonine and loads it onto its peptidyl carrier domain, via a thioester linkage to the phosphopanthetheine moiety. Is highly specific for L-threonine. The protein is Syringomycin synthase SyrB1 of Pseudomonas syringae pv. syringae.